Here is a 170-residue protein sequence, read N- to C-terminus: Large ribosomal subunit protein bL9 (170 aa).

The segment at 149–170 (DGDNEDLDEDNAADENEDYSEE) is disordered.

It belongs to the bacterial ribosomal protein bL9 family.

Functionally, binds to the 23S rRNA. The protein is Large ribosomal subunit protein bL9 of Psychrobacter cryohalolentis (strain ATCC BAA-1226 / DSM 17306 / VKM B-2378 / K5).